A 265-amino-acid polypeptide reads, in one-letter code: Undecaprenyl-diphosphatase (265 aa).

Transmembrane regions (helical) follow at residues 42-62 (AATF…VLYW), 82-102 (GIVL…LLHA), 108-128 (LFRP…MILV), 157-177 (LALW…MLLG), 181-201 (PLAA…ATGY), 217-237 (FFLV…KVFV), and 244-264 (TLIP…YFMV).

The protein belongs to the UppP family.

It localises to the cell inner membrane. The catalysed reaction is di-trans,octa-cis-undecaprenyl diphosphate + H2O = di-trans,octa-cis-undecaprenyl phosphate + phosphate + H(+). Functionally, catalyzes the dephosphorylation of undecaprenyl diphosphate (UPP). Confers resistance to bacitracin. The protein is Undecaprenyl-diphosphatase of Desulfovibrio desulfuricans (strain ATCC 27774 / DSM 6949 / MB).